A 179-amino-acid polypeptide reads, in one-letter code: SCAN domain-containing protein 1 (179 aa).

The disordered stretch occupies residues 1-107 (MAATEPILAT…AGSRLGPETF (107 aa)). A compositionally biased stretch (low complexity) spans 52–80 (SPNAAVPEAIPTPRAAASAALELPLGPAP). One can recognise an SCAN box domain in the interval 108-166 (RQRFRQFRYQDAAGPREAFRQLRELSRQWLRPDIRTKEQIVEMLVQEQLLAILPEAARA).

As to quaternary structure, interacts with ZNF202.

Its subcellular location is the nucleus. In terms of biological role, may regulate transcriptional activity. The chain is SCAN domain-containing protein 1 (SCAND1) from Pan paniscus (Pygmy chimpanzee).